Reading from the N-terminus, the 354-residue chain is 3'-5' exonuclease (354 aa).

Positions 1–120 (MEKYLIKMPI…PSPEKEKPEK (120 aa)) are disordered. Basic and acidic residues-rich tracts occupy residues 13-23 (KASEVPKDKAV), 36-50 (TKND…KENA), and 71-91 (KNLD…ENPP). 3 positions are modified to phosphoserine: serine 104, serine 110, and serine 112. Residues 146 to 314 (VLQWVEKQKD…GQVIYRELER (169 aa)) enclose the 3'-5' exonuclease domain. Mg(2+)-binding residues include aspartate 163, glutamate 165, and aspartate 301.

It belongs to the WRNexo family.

It localises to the nucleus. Functionally, has exonuclease activity on both single-stranded and duplex templates bearing overhangs, but not blunt ended duplex DNA, and cleaves in a 3'-5' direction. Essential for the formation of DNA replication focal centers. Has an important role in maintaining genome stability. The polypeptide is 3'-5' exonuclease (Drosophila erecta (Fruit fly)).